Here is a 124-residue protein sequence, read N- to C-terminus: Small ribosomal subunit protein uS13 (124 aa).

The span at 93–117 (KNLPVRGQRTRTNARTRKGPRKTVA) shows a compositional bias: basic residues. A disordered region spans residues 93-124 (KNLPVRGQRTRTNARTRKGPRKTVANKKIESK).

This sequence belongs to the universal ribosomal protein uS13 family. Part of the 30S ribosomal subunit. Forms a loose heterodimer with protein S19. Forms two bridges to the 50S subunit in the 70S ribosome.

Its function is as follows. Located at the top of the head of the 30S subunit, it contacts several helices of the 16S rRNA. In the 70S ribosome it contacts the 23S rRNA (bridge B1a) and protein L5 of the 50S subunit (bridge B1b), connecting the 2 subunits; these bridges are implicated in subunit movement. Contacts the tRNAs in the A and P-sites. This chain is Small ribosomal subunit protein uS13, found in Mycoplasma genitalium (strain ATCC 33530 / DSM 19775 / NCTC 10195 / G37) (Mycoplasmoides genitalium).